Here is a 545-residue protein sequence, read N- to C-terminus: Membrane protein insertase YidC (545 aa).

The next 4 membrane-spanning stretches (helical) occupy residues 350–370 (IIGN…AVLY), 424–444 (LPML…FASV), 461–481 (ADPY…QTYL), and 498–518 (PLVF…YWVV).

This sequence belongs to the OXA1/ALB3/YidC family. Type 1 subfamily. Interacts with the Sec translocase complex via SecD. Specifically interacts with transmembrane segments of nascent integral membrane proteins during membrane integration.

It localises to the cell inner membrane. Its function is as follows. Required for the insertion and/or proper folding and/or complex formation of integral membrane proteins into the membrane. Involved in integration of membrane proteins that insert both dependently and independently of the Sec translocase complex, as well as at least some lipoproteins. Aids folding of multispanning membrane proteins. The chain is Membrane protein insertase YidC from Neisseria meningitidis serogroup B (strain ATCC BAA-335 / MC58).